Consider the following 148-residue polypeptide: Cytochrome c-type biogenesis protein CcmE (148 aa).

Topologically, residues 1 to 7 (MKPRNRR) are cytoplasmic. A helical; Signal-anchor for type II membrane protein membrane pass occupies residues 8–28 (IALIVAGLSALGIATALVLNA). Residues 29 to 148 (FQSNLVFFFT…VQKKPASRKP (120 aa)) are Periplasmic-facing. 2 residues coordinate heme: histidine 123 and tyrosine 127. The segment at 128 to 148 (MPPEAQHALDEVQKKPASRKP) is disordered.

It belongs to the CcmE/CycJ family.

Its subcellular location is the cell inner membrane. In terms of biological role, heme chaperone required for the biogenesis of c-type cytochromes. Transiently binds heme delivered by CcmC and transfers the heme to apo-cytochromes in a process facilitated by CcmF and CcmH. This Pseudomonas aeruginosa protein is Cytochrome c-type biogenesis protein CcmE.